A 488-amino-acid chain; its full sequence is ATP-dependent RNA helicase dbp3 (488 aa).

Positions 1 to 29 (MAKREHQDQTGDSRPSKKSKGTKDTKKNT) are enriched in basic and acidic residues. The segment at 1–42 (MAKREHQDQTGDSRPSKKSKGTKDTKKNTEVSPPYFQSPALD) is disordered. Residues 92 to 100 (GFASPTAIQ) carry the Q motif motif. The Helicase ATP-binding domain occupies 104–279 (WPLLFAGRDV…STFMTSPVTV (176 aa)). Position 117–124 (117–124 (AETGSGKT)) interacts with ATP. Residues 226 to 229 (DEAD) carry the DEAD box motif. Residues 306–457 (EKEQRLVQIL…EVPEALLKFG (152 aa)) enclose the Helicase C-terminal domain.

The protein belongs to the DEAD box helicase family. DDX5/DBP2 subfamily.

The protein resides in the nucleus. Its subcellular location is the nucleolus. The enzyme catalyses ATP + H2O = ADP + phosphate + H(+). ATP-dependent RNA helicase required for 60S ribosomal subunit synthesis. Involved in efficient pre-rRNA processing, predominantly at site A3, which is necessary for the normal formation of 25S and 5.8S rRNAs. The sequence is that of ATP-dependent RNA helicase dbp3 (dbp3) from Emericella nidulans (strain FGSC A4 / ATCC 38163 / CBS 112.46 / NRRL 194 / M139) (Aspergillus nidulans).